A 481-amino-acid polypeptide reads, in one-letter code: Adenosylhomocysteinase (481 aa).

3 residues coordinate substrate: Thr-65, Asp-140, and Glu-200. 201–203 is a binding site for NAD(+); the sequence is TTT. The substrate site is built by Lys-230 and Asp-234. Residues Asn-235, 264–269, Glu-287, Asn-322, 343–345, and Asn-393 contribute to the NAD(+) site; these read GYGDVG and IGH.

It belongs to the adenosylhomocysteinase family. NAD(+) serves as cofactor.

It localises to the cytoplasm. It catalyses the reaction S-adenosyl-L-homocysteine + H2O = L-homocysteine + adenosine. Its pathway is amino-acid biosynthesis; L-homocysteine biosynthesis; L-homocysteine from S-adenosyl-L-homocysteine: step 1/1. In terms of biological role, may play a key role in the regulation of the intracellular concentration of adenosylhomocysteine. In Polynucleobacter necessarius subsp. necessarius (strain STIR1), this protein is Adenosylhomocysteinase.